We begin with the raw amino-acid sequence, 300 residues long: ETS homologous factor (300 aa).

The region spanning 29–115 is the PNT domain; the sequence is STCNVSSGFF…SNLQHLKWNG (87 aa). The tract at residues 183–202 is disordered; that stretch reads ESPDMKKEQDPPAKCHTKKH. Positions 185-195 are enriched in basic and acidic residues; it reads PDMKKEQDPPA. The segment at residues 207–289 is a DNA-binding region (ETS); that stretch reads THLWEFIRDI…DGRRLVYKFG (83 aa).

The protein belongs to the ETS family. Expressed exclusively in tissues with a high content of epithelial cells. Highly expressed in salivary gland, mammary gland, prostate, and lung. Weakly expressed in kidney and colon. Not detected in heart, brain, placenta, liver, skeletal muscle, spleen, thymus, testis, ovary, small intestine or peripheral blood leukocytes.

Its subcellular location is the nucleus. Transcriptional activator that may play a role in regulating epithelial cell differentiation and proliferation. May act as a repressor for a specific subset of ETS/AP-1-responsive genes and as a modulator of the nuclear response to mitogen-activated protein kinase signaling cascades. Binds to DNA sequences containing the consensus nucleotide core sequence GGAA. Involved in regulation of TNFRSF10B/DR5 expression through Ets-binding sequences on the TNFRSF10B/DR5 promoter. May contribute to development and carcinogenesis by acting as a tumor suppressor gene or anti-oncogene. This Homo sapiens (Human) protein is ETS homologous factor.